The sequence spans 238 residues: uncharacterized protein (238 aa).

Transmembrane regions (helical) follow at residues 22–42, 49–69, 78–98, 105–125, 141–161, 166–186, and 208–228; these read VYGW…GLYA, LFSL…YIQA, AVMG…GTMV, FGGG…GLSA, ILML…VVSL, PLMY…LTVV, and LSLI…WYLL.

The protein belongs to the BI1 family.

It localises to the cell membrane. This is an uncharacterized protein from Chlamydia muridarum (strain MoPn / Nigg).